The chain runs to 69 residues: Large ribosomal subunit protein bL31 (69 aa).

Residues Cys-16, Cys-18, Cys-38, and Cys-41 each contribute to the Zn(2+) site.

This sequence belongs to the bacterial ribosomal protein bL31 family. Type A subfamily. In terms of assembly, part of the 50S ribosomal subunit. Requires Zn(2+) as cofactor.

Functionally, binds the 23S rRNA. The protein is Large ribosomal subunit protein bL31 of Cutibacterium acnes (strain DSM 16379 / KPA171202) (Propionibacterium acnes).